A 444-amino-acid chain; its full sequence is Sonic hedgehog protein (444 aa).

An N-terminal signal peptide occupies residues 1–24; sequence MLVATQSLLLLSFICTLVTPPGLA. Residue Cys-25 is the site of N-palmitoyl cysteine attachment. The short motif at 33–39 is the Cardin-Weintraub element; the sequence is KRRHPKK. Ca(2+)-binding residues include Glu-90, Glu-91, Asp-96, Thr-126, Glu-127, Asp-130, and Asp-132. Zn(2+) is bound by residues His-141, Asp-148, and His-183. The Cholesterol glycine ester moiety is linked to residue Gly-198. A run of 3 repeats spans residues 386–393, 394–401, and 403–409. The 3 X 8 AA tandem repeats of Q-V-D-L-Q-S-H-H stretch occupies residues 386-409; sequence QVDLQSHHQVDLQSHHQVDLQSHH.

The protein belongs to the hedgehog family. In terms of assembly, interacts with HHATL/GUP1 which negatively regulates HHAT-mediated palmitoylation of the SHH N-terminus. Interacts with BOC and CDON. Interacts with HHIP. Interacts with DISP1 via its cholesterol anchor. Interacts with SCUBE2. As to quaternary structure, multimer. The C-terminal domain displays an autoproteolysis activity and a cholesterol transferase activity. Both activities result in the cleavage of the full-length protein and covalent attachment of a cholesterol moiety to the C-terminal of the newly generated N-terminal fragment (ShhN). Cholesterylation is required for the sonic hedgehog protein N-product targeting to lipid rafts and multimerization. ShhN is the active species in both local and long-range signaling, whereas the C-product (ShhC) is degraded in the reticulum endoplasmic. Post-translationally, N-palmitoylation by HHAT of ShhN is required for sonic hedgehog protein N-product multimerization and full activity. It is a prerequisite for the membrane-proximal positioning and the subsequent shedding of this N-terminal peptide. In terms of processing, the lipidated N- and C-terminal peptides of ShhNp can be cleaved (shedding). The N-terminal palmitoylated peptide is cleaved at the Cardin-Weintraub (CW) motif site. The cleavage reduced the interactions with heparan sulfate. The cleavage is enhanced by SCUBE2. In terms of tissue distribution, strongly expressed in notochord and neural floor plate during embryogenesis. In tadpole, high expression is observed in pancreas/stomach, moderate expression in tail, and low expression in intestine, brain, and hind limb.

The protein localises to the endoplasmic reticulum membrane. It is found in the golgi apparatus membrane. Its subcellular location is the cell membrane. It carries out the reaction glycyl-L-cysteinyl-[protein] + cholesterol + H(+) = [protein]-C-terminal glycyl cholesterol ester + N-terminal L-cysteinyl-[protein]. Functionally, the C-terminal part of the sonic hedgehog protein precursor displays an autoproteolysis and a cholesterol transferase activity. Both activities result in the cleavage of the full-length protein into two parts (ShhN and ShhC) followed by the covalent attachment of a cholesterol moiety to the C-terminal of the newly generated ShhN. Both activities occur in the endoplasmic reticulum. Once cleaved, ShhC is degraded in the endoplasmic reticulum. Its function is as follows. The dually lipidated sonic hedgehog protein N-product (ShhNp) is a morphogen which is essential for a variety of patterning events during development. Induces ventral cell fate in the neural tube and somites. Involved in the patterning of the anterior-posterior axis of the developing limb bud. Essential for axon guidance. Binds to the patched (PTCH1) receptor, which functions in association with smoothened (SMO), to activate the transcription of target genes. In the absence of SHH, PTCH1 represses the constitutive signaling activity of SMO. The polypeptide is Sonic hedgehog protein (Xenopus laevis (African clawed frog)).